A 58-amino-acid chain; its full sequence is uncharacterized protein (58 aa).

The protein resides in the plastid. The protein localises to the chloroplast. This is an uncharacterized protein from Porphyra purpurea (Red seaweed).